The sequence spans 817 residues: Probable beta-glucosidase G (817 aa).

The N-terminal stretch at 1-20 (MASIAHLIFSGLLAATVANS) is a signal peptide. Asn-40, Asn-58, Asn-229, and Asn-276 each carry an N-linked (GlcNAc...) asparagine glycan. Asp-304 is an active-site residue. 10 N-linked (GlcNAc...) asparagine glycosylation sites follow: Asn-343, Asn-350, Asn-402, Asn-507, Asn-563, Asn-584, Asn-623, Asn-662, Asn-679, and Asn-715.

Belongs to the glycosyl hydrolase 3 family.

The protein localises to the secreted. The catalysed reaction is Hydrolysis of terminal, non-reducing beta-D-glucosyl residues with release of beta-D-glucose.. The protein operates within glycan metabolism; cellulose degradation. In terms of biological role, beta-glucosidases are one of a number of cellulolytic enzymes involved in the degradation of cellulosic biomass. Catalyzes the last step releasing glucose from the inhibitory cellobiose. This Neosartorya fischeri (strain ATCC 1020 / DSM 3700 / CBS 544.65 / FGSC A1164 / JCM 1740 / NRRL 181 / WB 181) (Aspergillus fischerianus) protein is Probable beta-glucosidase G (bglG).